The following is a 118-amino-acid chain: Small ribosomal subunit protein uS13 (118 aa).

The tract at residues 94 to 118 (SLPVRGQRSKTNARTRKGPRKAIKK) is disordered.

It belongs to the universal ribosomal protein uS13 family. As to quaternary structure, part of the 30S ribosomal subunit. Forms a loose heterodimer with protein S19. Forms two bridges to the 50S subunit in the 70S ribosome.

Functionally, located at the top of the head of the 30S subunit, it contacts several helices of the 16S rRNA. In the 70S ribosome it contacts the 23S rRNA (bridge B1a) and protein L5 of the 50S subunit (bridge B1b), connecting the 2 subunits; these bridges are implicated in subunit movement. Contacts the tRNAs in the A and P-sites. The protein is Small ribosomal subunit protein uS13 of Psychromonas ingrahamii (strain DSM 17664 / CCUG 51855 / 37).